The sequence spans 882 residues: DNA mismatch repair protein MutS (882 aa).

626–633 (GPNMAGKS) contributes to the ATP binding site.

It belongs to the DNA mismatch repair MutS family.

This protein is involved in the repair of mismatches in DNA. It is possible that it carries out the mismatch recognition step. This protein has a weak ATPase activity. The sequence is that of DNA mismatch repair protein MutS from Anaeromyxobacter sp. (strain Fw109-5).